Here is a 217-residue protein sequence, read N- to C-terminus: Non-structural protein NS3 (217 aa).

This sequence belongs to the orbivirus NS3 family.

May play a role in the release of virions from infected cells. In Camelus dromedarius (Dromedary), this protein is Non-structural protein NS3 (Segment-10).